A 217-amino-acid polypeptide reads, in one-letter code: Cytidylate kinase (217 aa).

10–18 (GPAGAGKST) contacts ATP.

The protein belongs to the cytidylate kinase family. Type 1 subfamily.

The protein localises to the cytoplasm. The enzyme catalyses CMP + ATP = CDP + ADP. It carries out the reaction dCMP + ATP = dCDP + ADP. The sequence is that of Cytidylate kinase from Clostridium botulinum (strain Langeland / NCTC 10281 / Type F).